The primary structure comprises 241 residues: Small ribosomal subunit protein uS2 (241 aa).

Belongs to the universal ribosomal protein uS2 family.

This Shigella flexneri serotype 5b (strain 8401) protein is Small ribosomal subunit protein uS2.